The sequence spans 375 residues: Chaperone protein DnaJ (375 aa).

The J domain occupies 5-70; that stretch reads DFYETLGVAK…QKRAAYDRYG (66 aa). The CR-type zinc-finger motif lies at 136-214; it reads GKTAQIRVPT…CHGQGRVTEE (79 aa). Residues cysteine 149, cysteine 152, cysteine 166, cysteine 169, cysteine 188, cysteine 191, cysteine 202, and cysteine 205 each contribute to the Zn(2+) site. CXXCXGXG motif repeat units lie at residues 149–156, 166–173, 188–195, and 202–209; these read CDVCSGSG, CGTCQGTG, CPTCHGRG, and CPKCHGQG.

The protein belongs to the DnaJ family. In terms of assembly, homodimer. Zn(2+) serves as cofactor.

It localises to the cytoplasm. Its function is as follows. Participates actively in the response to hyperosmotic and heat shock by preventing the aggregation of stress-denatured proteins and by disaggregating proteins, also in an autonomous, DnaK-independent fashion. Unfolded proteins bind initially to DnaJ; upon interaction with the DnaJ-bound protein, DnaK hydrolyzes its bound ATP, resulting in the formation of a stable complex. GrpE releases ADP from DnaK; ATP binding to DnaK triggers the release of the substrate protein, thus completing the reaction cycle. Several rounds of ATP-dependent interactions between DnaJ, DnaK and GrpE are required for fully efficient folding. Also involved, together with DnaK and GrpE, in the DNA replication of plasmids through activation of initiation proteins. This chain is Chaperone protein DnaJ, found in Rhizobium johnstonii (strain DSM 114642 / LMG 32736 / 3841) (Rhizobium leguminosarum bv. viciae).